We begin with the raw amino-acid sequence, 179 residues long: ATP synthase subunit delta (179 aa).

It belongs to the ATPase delta chain family. F-type ATPases have 2 components, F(1) - the catalytic core - and F(0) - the membrane proton channel. F(1) has five subunits: alpha(3), beta(3), gamma(1), delta(1), epsilon(1). F(0) has three main subunits: a(1), b(2) and c(10-14). The alpha and beta chains form an alternating ring which encloses part of the gamma chain. F(1) is attached to F(0) by a central stalk formed by the gamma and epsilon chains, while a peripheral stalk is formed by the delta and b chains.

The protein localises to the cell inner membrane. F(1)F(0) ATP synthase produces ATP from ADP in the presence of a proton or sodium gradient. F-type ATPases consist of two structural domains, F(1) containing the extramembraneous catalytic core and F(0) containing the membrane proton channel, linked together by a central stalk and a peripheral stalk. During catalysis, ATP synthesis in the catalytic domain of F(1) is coupled via a rotary mechanism of the central stalk subunits to proton translocation. Its function is as follows. This protein is part of the stalk that links CF(0) to CF(1). It either transmits conformational changes from CF(0) to CF(1) or is implicated in proton conduction. The polypeptide is ATP synthase subunit delta (Burkholderia pseudomallei (strain 1710b)).